The sequence spans 47 residues: MKKFRWAILLAVLVACLLLWMQTLNVMCDQDVQFFSGICTINKFIPW.

A helical transmembrane segment spans residues 6–26 (WAILLAVLVACLLLWMQTLNV).

This sequence belongs to the MgrB family. In terms of assembly, may form homooligomers. Probably interacts with the periplasmic domain of PhoQ.

The protein localises to the cell inner membrane. In terms of biological role, phoP-regulated transcription is redox-sensitive, being activated when the periplasm becomes more reducing. MgrB acts between DsbA/DsbB and PhoP/PhoQ in this pathway. Represses PhoP/PhoQ signaling, possibly by binding to the periplasmic domain of PhoQ, altering its activity and that of downstream effector PhoP. In Cronobacter sakazakii (strain ATCC BAA-894) (Enterobacter sakazakii), this protein is PhoP/PhoQ regulator MgrB.